A 183-amino-acid chain; its full sequence is Caspase recruitment domain-containing protein 19 (183 aa).

A disulfide bond links C7 and C77. One can recognise a CARD domain in the interval 8–99; sequence DRLVQDTPFL…PLHSCLPSRH (92 aa). The chain crosses the membrane as a helical span at residues 122 to 142; it reads GPVAFLTCLGLAAGLALLIYC.

As to quaternary structure, associates with BCL10 by CARD-CARD interaction.

The protein localises to the endoplasmic reticulum membrane. Its subcellular location is the mitochondrion membrane. Functionally, plays a role in inhibiting the effects of BCL10-induced activation of NF-kappa-B. May inhibit the phosphorylation of BCL10 in a CARD-dependent manner. This Bos taurus (Bovine) protein is Caspase recruitment domain-containing protein 19 (CARD19).